The primary structure comprises 332 residues: MSASSLPLPQGKSVSLKQFVSRHINEIGLLVVIAILYLVFSLNAPGFISLNNQMNVLRDAATIGIAAWAMTLIIISGEIDVSVGPMVAFVSVCLAFLLQFEVPLAVACLLVLLLGALMGTLAGVLRGVFNVPSFVATLGLWSALRGMGLFMTNALPVPIDENEVLDWLGGQFLGVPVSALIMIVLFALFVFISRKTAFGRSVFAVGGNATAAQLCGINVRRVRILIFTLSGLLAAVTGILLAARLGSGNAGAANGLEFDVIAAVVVGGTALSGGRGSLFGTLLGVLVITLIGNGLVLLGINSFFQQVVRGVIIVVAVLANILLTQRSSKAKR.

The next 10 membrane-spanning stretches (helical) occupy residues 28–48 (GLLVVIAILYLVFSLNAPGFI), 63–83 (IGIAAWAMTLIIISGEIDVSV), 84–104 (GPMVAFVSVCLAFLLQFEVPL), 105–125 (AVACLLVLLLGALMGTLAGVL), 131–151 (VPSFVATLGLWSALRGMGLFM), 172–192 (FLGVPVSALIMIVLFALFVFI), 222–242 (VRILIFTLSGLLAAVTGILLA), 251–271 (GAANGLEFDVIAAVVVGGTAL), 278–298 (LFGTLLGVLVITLIGNGLVLL), and 303–323 (FFQQVVRGVIIVVAVLANILL).

It belongs to the binding-protein-dependent transport system permease family. AraH/RbsC subfamily.

It localises to the cell inner membrane. In terms of biological role, probably part of the binding-protein-dependent transport system YphDEF. Probably responsible for the translocation of the substrate across the membrane. The polypeptide is Probable ABC transporter permease protein YphD (yphD) (Escherichia coli (strain K12)).